The chain runs to 573 residues: Leucine aminopeptidase, chloroplastic (573 aa).

The N-terminal 53 residues, 1 to 53 (MATLRVSSLLASSPSSLHCNPSVFTKCQSSPRWAFSFSVTPLCSRRSKRIVHC), are a transit peptide targeting the chloroplast. Residues K342 and D347 each coordinate Mn(2+). K354 is an active-site residue. Positions 367, 427, and 429 each coordinate Mn(2+). R431 is an active-site residue.

It belongs to the peptidase M17 family. In terms of assembly, homohexamer (dimer of homotrimers). Mn(2+) is required as a cofactor. As to expression, in tubers and floral buds of untreated plants. After abscisic acid (ABA) treatment or mechanical wounding is mostly accumulated in leaves, to a lesser extent in stems, but not in roots.

Its subcellular location is the plastid. The protein localises to the chloroplast. It carries out the reaction Release of an N-terminal amino acid, Xaa-|-Yaa-, in which Xaa is preferably Leu, but may be other amino acids including Pro although not Arg or Lys, and Yaa may be Pro. Amino acid amides and methyl esters are also readily hydrolyzed, but rates on arylamides are exceedingly low.. It catalyses the reaction Release of N-terminal proline from a peptide.. In terms of biological role, presumably involved in the processing and regular turnover of intracellular proteins. In Solanum tuberosum (Potato), this protein is Leucine aminopeptidase, chloroplastic (LAP).